An 816-amino-acid chain; its full sequence is Leucine--tRNA ligase (816 aa).

The 'HIGH' region signature appears at 46–56 (PYPSGALHMGH). The 'KMSKS' region signature appears at 638–642 (KMSKS). Lys641 provides a ligand contact to ATP.

Belongs to the class-I aminoacyl-tRNA synthetase family.

The protein resides in the cytoplasm. It carries out the reaction tRNA(Leu) + L-leucine + ATP = L-leucyl-tRNA(Leu) + AMP + diphosphate. In Xanthomonas campestris pv. campestris (strain ATCC 33913 / DSM 3586 / NCPPB 528 / LMG 568 / P 25), this protein is Leucine--tRNA ligase.